Here is a 65-residue protein sequence, read N- to C-terminus: Large ribosomal subunit protein bL35 (65 aa).

Positions 1–26 (MPKIKTVRGAAKRFKKTASGGFKRKQ) are disordered. The segment covering 10 to 26 (AAKRFKKTASGGFKRKQ) has biased composition (basic residues).

The protein belongs to the bacterial ribosomal protein bL35 family.

This is Large ribosomal subunit protein bL35 from Mannheimia succiniciproducens (strain KCTC 0769BP / MBEL55E).